Here is a 684-residue protein sequence, read N- to C-terminus: Ubinuclein-1 (684 aa).

5 disordered regions span residues Y108 to D137, Y157 to S287, N311 to K332, M609 to T631, and P660 to S684. The span at S114–D137 shows a compositional bias: acidic residues. Composition is skewed to basic and acidic residues over residues Y157–E167 and S184–T199. Residues S211 to V235 are compositionally biased toward polar residues. Residues D238–E260 are compositionally biased toward basic and acidic residues. 4 stretches are compositionally biased toward polar residues: residues T261–L284, N311–A321, D611–T631, and Q669–S684.

It belongs to the ubinuclein family. In terms of assembly, component of the HIRA complex made of UBN1, UBN2, ASF1A, CABIN1 and HIRA. Interacts with HIRA.

Its subcellular location is the nucleus. The protein resides in the nucleolus. May be required for replication-independent chromatin assembly. The polypeptide is Ubinuclein-1 (Arabidopsis thaliana (Mouse-ear cress)).